Consider the following 298-residue polypeptide: Foldase protein PrsA 1 (298 aa).

Positions 1-19 (MKKWLIALAGVLLTFTLAG) are cleaved as a signal peptide. Cys20 carries the N-palmitoyl cysteine lipid modification. Residue Cys20 is the site of S-diacylglycerol cysteine attachment. The PpiC domain occupies 136–232 (EPKVTVQHIL…NGYEIIRMIK (97 aa)).

The protein belongs to the PrsA family.

It localises to the cell membrane. The enzyme catalyses [protein]-peptidylproline (omega=180) = [protein]-peptidylproline (omega=0). Plays a major role in protein secretion by helping the post-translocational extracellular folding of several secreted proteins. In Lactiplantibacillus plantarum (strain ATCC BAA-793 / NCIMB 8826 / WCFS1) (Lactobacillus plantarum), this protein is Foldase protein PrsA 1 (prsA1).